The chain runs to 33 residues: MNLELIGQLVTVALVVGAGPIIIGALFARGGNL.

The chain crosses the membrane as a helical span at residues 5–25; the sequence is LIGQLVTVALVVGAGPIIIGA.

Belongs to the Psb30/Ycf12 family. PSII is composed of 1 copy each of membrane proteins PsbA, PsbB, PsbC, PsbD, PsbE, PsbF, PsbH, PsbI, PsbJ, PsbK, PsbL, PsbM, PsbT, PsbX, PsbY, PsbZ, Psb30/Ycf12, peripheral proteins of the oxygen-evolving complex and a large number of cofactors. It forms dimeric complexes.

The protein localises to the plastid. The protein resides in the chloroplast thylakoid membrane. A core subunit of photosystem II (PSII), probably helps stabilize the reaction center. This chain is Photosystem II reaction center protein Psb30, found in Ostreococcus tauri.